A 1232-amino-acid chain; its full sequence is DNA-directed RNA polymerase subunit beta (1232 aa).

A disordered region spans residues 1170-1232 (SVDEDADELE…LDLDDFGDEH (63 aa)). A compositionally biased stretch (acidic residues) spans 1171–1180 (VDEDADELEV). A compositionally biased stretch (basic and acidic residues) spans 1189 to 1198 (PEEKEEKEKE). Acidic residues predominate over residues 1199 to 1232 (DSDEYDDLREEDVEPDLEELSLDDLDLDDFGDEH).

This sequence belongs to the RNA polymerase beta chain family. The RNAP catalytic core consists of 2 alpha, 1 beta, 1 beta' and 1 omega subunit. When a sigma factor is associated with the core the holoenzyme is formed, which can initiate transcription.

It carries out the reaction RNA(n) + a ribonucleoside 5'-triphosphate = RNA(n+1) + diphosphate. In terms of biological role, DNA-dependent RNA polymerase catalyzes the transcription of DNA into RNA using the four ribonucleoside triphosphates as substrates. The chain is DNA-directed RNA polymerase subunit beta from Clostridium botulinum (strain Kyoto / Type A2).